The following is a 391-amino-acid chain: Processive diacylglycerol beta-glucosyltransferase (391 aa).

Belongs to the glycosyltransferase 28 family. UgtP subfamily.

The protein resides in the cell membrane. It catalyses the reaction a 1,2-diacyl-3-O-(beta-D-glucopyranosyl)-sn-glycerol + UDP-alpha-D-glucose = a 1,2-diacyl-3-O-(beta-D-Glc-(1-&gt;6)-beta-D-Glc)-sn-glycerol + UDP + H(+). It carries out the reaction a 1,2-diacyl-sn-glycerol + UDP-alpha-D-glucose = a 1,2-diacyl-3-O-(beta-D-glucopyranosyl)-sn-glycerol + UDP + H(+). It functions in the pathway glycolipid metabolism; diglucosyl-diacylglycerol biosynthesis. Functionally, processive glucosyltransferase involved in the biosynthesis of both the bilayer- and non-bilayer-forming membrane glucolipids. Is able to successively transfer two glucosyl residues to diacylglycerol (DAG), thereby catalyzing the formation of beta-monoglucosyl-DAG (3-O-(beta-D-glucopyranosyl)-1,2-diacyl-sn-glycerol) and beta-diglucosyl-DAG (3-O-(beta-D-glucopyranosyl-beta-(1-&gt;6)-D-glucopyranosyl)-1,2-diacyl-sn-glycerol). Beta-diglucosyl-DAG is the predominant glycolipid found in Bacillales and is also used as a membrane anchor for lipoteichoic acid (LTA). This is Processive diacylglycerol beta-glucosyltransferase from Staphylococcus aureus (strain bovine RF122 / ET3-1).